The sequence spans 70 residues: U2-agatoxin-Ao1q (70 aa).

A signal peptide spans methionine 1–alanine 20. The propeptide occupies valine 21–arginine 34. 2 disulfides stabilise this stretch: cysteine 44-cysteine 58 and cysteine 52-cysteine 68. At leucine 69 the chain carries Leucine amide.

This sequence belongs to the neurotoxin 01 (U2-agtx) family. In terms of processing, does not contain a cysteine at position 53 which disrupts the cysteine framework. Expressed by the venom gland.

The protein localises to the secreted. Its function is as follows. Insect active toxin causing rapid but reversible paralysis in crickets. No activity shown in mammals. Does not show effect on mammalian voltage-gated calcium channels. The chain is U2-agatoxin-Ao1q from Agelena orientalis (Funnel-web spider).